Consider the following 183-residue polypeptide: UPF0397 protein PBPRA2239 (183 aa).

Transmembrane regions (helical) follow at residues 8-28 (VVLI…MFGI), 41-61 (AVLA…VGFI), 69-89 (FAGW…GLII), 110-130 (FALF…CSAY), and 147-167 (LIII…YILT).

Belongs to the UPF0397 family.

The protein resides in the cell membrane. This is UPF0397 protein PBPRA2239 from Photobacterium profundum (strain SS9).